The sequence spans 507 residues: Extracellular elastase (507 aa).

The first 28 residues, 1-28 (MKNFSKFALTSIAALTVASPLVNTEVDA), serve as a signal peptide directing secretion. The propeptide occupies 29 to 207 (KDKVSATQNI…VVDKLNMIKE (179 aa)). A Ca(2+)-binding site is contributed by D347. H351 is a Zn(2+) binding site. The active site involves E352. Zn(2+)-binding residues include H355 and E375. Residues D386, E388, D389, L391, E394, Y397, T398, V401, and D404 each contribute to the Ca(2+) site. H435 acts as the Proton donor in catalysis.

The protein belongs to the peptidase M4 family. It depends on Ca(2+) as a cofactor. Requires Zn(2+) as cofactor.

It localises to the secreted. Functionally, protease that has a low substrate specificity. Glucagon is preferentially cleaved between aromatic (Phe) and hydrophobic (Val) amino acids. Hydrolyzes casein and elastin. The sequence is that of Extracellular elastase (sepA) from Staphylococcus epidermidis.